We begin with the raw amino-acid sequence, 126 residues long: Fatty acid-binding protein, liver (126 aa).

Residue alanine 2 is modified to N-acetylalanine. Cholate is bound by residues arginine 56, glutamine 57, lysine 77, histidine 99, and glutamine 101.

The protein belongs to the calycin superfamily. Fatty-acid binding protein (FABP) family.

It localises to the cytoplasm. Its function is as follows. Binds free fatty acids and their coenzyme A derivatives, bilirubin, and some other small molecules in the cytoplasm. May be involved in intracellular lipid transport. Binds 2 molecules of cholate per subunit. This chain is Fatty acid-binding protein, liver (FABP1), found in Gallus gallus (Chicken).